Here is a 27-residue protein sequence, read N- to C-terminus: Caerulein precursor fragment R8 (27 aa).

In terms of tissue distribution, expressed by the skin glands.

The protein resides in the secreted. Its function is as follows. Antimicrobial peptide. This Xenopus ruwenzoriensis (Uganda clawed frog) protein is Caerulein precursor fragment R8.